Reading from the N-terminus, the 516-residue chain is Cytochrome P450 monooxygenase lcsI (516 aa).

Residues 20 to 42 form a helical membrane-spanning segment; the sequence is ICVAAGCAFALSLLYLYVRALYL. N-linked (GlcNAc...) asparagine glycosylation is found at Asn131, Asn184, Asn415, Asn420, and Asn442. Cys456 is a binding site for heme.

Belongs to the cytochrome P450 family. It depends on heme as a cofactor.

It localises to the membrane. It functions in the pathway secondary metabolite biosynthesis. Cytochrome P450 monooxygenase; part of the gene cluster that mediates the biosynthesis of the lipopeptide antibiotics leucinostatins that show extensive biological activities, including antimalarial, antiviral, antibacterial, antifungal, and antitumor activities, as well as phytotoxic. Leucinostatin A contains nine amino acid residues, including the unusual amino acid 4-methyl-L-proline (MePro), 2-amino-6-hydroxy-4-methyl-8-oxodecanoic acid (AHyMeOA), 3-hydroxyleucine (HyLeu), alpha-aminoisobutyric acid (AIB), beta-Ala, a 4-methylhex-2-enoic acid at the N-terminus as well as a N1,N1-dimethylpropane-1,2-diamine (DPD) at the C-terminus. The biosynthesis of leucinostatins is probably initiated with the assembly of 4-methylhex-2-enoic acid by a reducing PKS. Two reducing polyketide synthases, lcsB and lcsC, have been identified in the cluster and it is not clear which is the one that assembles 4-methylhex-2-enoic acid since both contain KS, AT, DH, cMT, ER, KR and ACP domains. The polyketide residue might be transferred to the NRPS lcsA, mediated by two additional enzymes, the acyl-CoA ligase lcsD and the thioesterase lcsE. The linear polyketide carboxylic acid, which is released from PKS, is converted to a CoA thioester by lcsD, and then lcsE hydrolyzes the thiol bond and shuttles the polyketide intermediate to lcsA. The C domain of the first module catalyzed the condensation of 4-methylhex-2-enoic acid and MePro carried by domain A1, followed by successive condensations of nine amino acids to trigger the elongation of the linear peptide. A5 and A6 domains of lcsA are proposed to incorporate leucine, A2 AHyMeOA, and A3 incorporates HyLeu. A4, A7 and A8 incorporate AIB. The AHyMeOA in leucinostatin A activated by the A2 might be produced by the second PKS (lcsB or lcsC) present within the cluster. The MePro is probably produced via leucine cyclization and may originate from a separate pathway, independent of the cluster. Another nonproteinogenic amino acid, beta-Ala, could be produced by an aspartic acid decarboxylase also localized outside of the cluster. Two candidates are VFPBJ_01400 and VFPBJ_10476. The final peptide scaffold may be released by the NAD(P)H-dependent thioester reductase (TE) at the C-terminal region of lcsA. Transamination of the lcsA product by the transaminase lcsP may produce DPD at the C-terminus. Further hydroxylation steps performed alternatively by the cytochrome P450 monooxygenases lcsI, lcsK and lcsN then yield the non-methylated leucinostatins precursor. It is also possible that leucines can be hydroxylated prior to their incorporation into the peptide. Varying extents of methylation then lead to the formation of leucinostatins A and B. This chain is Cytochrome P450 monooxygenase lcsI, found in Purpureocillium lilacinum (Paecilomyces lilacinus).